Reading from the N-terminus, the 360-residue chain is Chorismate synthase (360 aa).

R46 lines the NADP(+) pocket. FMN contacts are provided by residues 123 to 125 (RSS), 235 to 236 (NA), G275, 290 to 294 (KPTPS), and R316.

This sequence belongs to the chorismate synthase family. In terms of assembly, homotetramer. Requires FMNH2 as cofactor.

It carries out the reaction 5-O-(1-carboxyvinyl)-3-phosphoshikimate = chorismate + phosphate. Its pathway is metabolic intermediate biosynthesis; chorismate biosynthesis; chorismate from D-erythrose 4-phosphate and phosphoenolpyruvate: step 7/7. Its function is as follows. Catalyzes the anti-1,4-elimination of the C-3 phosphate and the C-6 proR hydrogen from 5-enolpyruvylshikimate-3-phosphate (EPSP) to yield chorismate, which is the branch point compound that serves as the starting substrate for the three terminal pathways of aromatic amino acid biosynthesis. This reaction introduces a second double bond into the aromatic ring system. The protein is Chorismate synthase of Wolinella succinogenes (strain ATCC 29543 / DSM 1740 / CCUG 13145 / JCM 31913 / LMG 7466 / NCTC 11488 / FDC 602W) (Vibrio succinogenes).